A 486-amino-acid polypeptide reads, in one-letter code: MSNSNTPRKFSEKIAILERKQNEENTTFEDIMRQVQSITHHPTDSSGSSTATAPMPIPQQGLLPPQQPWGHNLGGSLPNVHQMPSYSPPQWPPNWQHEIQHRPIQGHRSRSPEDHMIGSASGSPSHHYHPYGMRSNGLSRSPDRTPPQHPQYTPYGPPYNQPGQLVPPESWNQINRARSDPAIHNMGGMVPMHPHHHQQQQMAFHQMPHYLQNSMPGPSGMMAPNSQSQQHSPQLTPQGSQQGSPVQMHHQIPPPLQMGNNQQMGGGNNGMSPLQSPNHMMTPMYGYHNGSPLHSPMDSPHASTLMLDGSGTPSPYMEVSPPGMHDFNQDAGSLPNLQNVQQQQQQQQEIYTNGGAPGGGYYHAPIGPRHSTGACGPRLVPGPALTPESQSAPTSPHNQLDPNQPPMWPTRTFSNSPEALDIPKLTITNAEGAPGHHVDSYNDFNDLGLDSLDSVLCNGAPPQTISNHQTPNNSFHDPGGTQMLQN.

Positions 1–62 (MSNSNTPRKF…APMPIPQQGL (62 aa)) are disordered. Basic and acidic residues predominate over residues 9-23 (KFSEKIAILERKQNE). Residues 34–52 (QVQSITHHPTDSSGSSTAT) show a composition bias toward polar residues. Serine 76 carries the post-translational modification Phosphoserine; by AMPK. A disordered region spans residues 103–166 (PIQGHRSRSP…PPYNQPGQLV (64 aa)). Positions 144-160 (RTPPQHPQYTPYGPPYN) are enriched in pro residues. Position 179 is a phosphoserine; by AMPK (serine 179). Disordered regions lie at residues 214-278 (SMPG…QSPN), 327-417 (FNQD…SNSP), and 460-486 (APPQ…MLQN). Polar residues-rich tracts occupy residues 224-245 (PNSQ…QGSP), 387-402 (PESQ…QLDP), and 461-475 (PPQT…NNSF).

It belongs to the TORC family. As to quaternary structure, interacts with crh-1. Post-translationally, phosphorylated by AMPK at Ser-76 and Ser-179. Dephosphorylated by tax-6, the catalytic subunit of calcineurin. As to expression, expressed throughout the intestine and in head and tail neurons. Expressed in octopaminergic RIC neurons.

It localises to the nucleus. Its subcellular location is the cytoplasm. It is found in the cytosol. In terms of biological role, transcriptional coactivator for crh-1, the homolog of vertebrate transcription factor CREB1. Regulates the transcription of metabolic genes and may have a role in mitochondrial dynamics and metabolism. Involved in modulation of lifespan. Through crh-1, counteracts the pro-lifespan-extension signals of AMPK both cell autonomously and, when expressed in neurons, at a systemic level, possibly using the catecholamine analog, octopamine, as a messenger. The polypeptide is CREB-regulated transcription coactivator 1 homolog (Caenorhabditis elegans).